The following is a 273-amino-acid chain: Shikimate dehydrogenase (NADP(+)) (273 aa).

Residues 14 to 16 and Thr-61 each bind shikimate; that span reads SKS. Lys-65 serves as the catalytic Proton acceptor. Shikimate contacts are provided by Asn-86 and Asp-102. NADP(+) contacts are provided by residues 126 to 130, 150 to 155, and Met-213; these read GAGGA and NRTHAR. Residue Tyr-215 coordinates shikimate. An NADP(+)-binding site is contributed by Gly-237.

Belongs to the shikimate dehydrogenase family. As to quaternary structure, homodimer.

It carries out the reaction shikimate + NADP(+) = 3-dehydroshikimate + NADPH + H(+). The protein operates within metabolic intermediate biosynthesis; chorismate biosynthesis; chorismate from D-erythrose 4-phosphate and phosphoenolpyruvate: step 4/7. In terms of biological role, involved in the biosynthesis of the chorismate, which leads to the biosynthesis of aromatic amino acids. Catalyzes the reversible NADPH linked reduction of 3-dehydroshikimate (DHSA) to yield shikimate (SA). The sequence is that of Shikimate dehydrogenase (NADP(+)) from Aeromonas hydrophila subsp. hydrophila (strain ATCC 7966 / DSM 30187 / BCRC 13018 / CCUG 14551 / JCM 1027 / KCTC 2358 / NCIMB 9240 / NCTC 8049).